The sequence spans 146 residues: Transcription initiation factor TFIID subunit 10b (146 aa).

The disordered stretch occupies residues 16 to 43 (GASSHGQSSGGGGGGDRDRTTPSSHLSD).

This sequence belongs to the TAF10 family. As to quaternary structure, belongs to the TFIID complex which is composed of TATA binding protein (Tbp) and a number of TBP-associated factors (TAFs). The N-terminus interacts with the histone fold of Taf8. As to expression, at embryonic stage 9, expression is seen in the mesodermal layer and midgut primordia. The mesoderm-specific expression persists in later stages of development and at its highest level is detected in midgut, hindgut, and differentiating somatic muscle fibers. Coexpressed with Taf10 in the lateral epidermis and anal plate.

The protein localises to the cytoplasm. It localises to the nucleus. In terms of biological role, TFIID is a multimeric protein complex that plays a central role in mediating promoter responses to various activators and repressors. In Drosophila melanogaster (Fruit fly), this protein is Transcription initiation factor TFIID subunit 10b.